Here is a 182-residue protein sequence, read N- to C-terminus: ADP-ribosylation factor-like protein 3 (182 aa).

G2 carries N-myristoyl glycine lipidation. S5 is modified (phosphoserine). Residues 24 to 31 (GLDNAGKT), T48, 67 to 71 (DIGGQ), G70, 126 to 129 (NKQD), and 159 to 161 (SAL) contribute to the GTP site. Mg(2+) contacts are provided by T31 and T48.

The protein belongs to the small GTPase superfamily. Arf family. In terms of assembly, found in a complex with ARL3, RP2 and UNC119 (or UNC119B); RP2 induces hydrolysis of GTP ARL3 in the complex, leading to the release of UNC119 (or UNC119B). Interacts with RP2; interaction is direct and stimulated with the activated GTP-bound form of ARL3. Interacts with SYS1. Interacts with ARL2BP; the GTP-bound form interacts with ARL2BP. Microtubule-associated protein. Does not interact with TBCC. Interacts with RP2. Interacts with PDE6D; the interaction occurs specifically with the GTP-bound form of ARL3. Interacts with GGA1; the interaction recruits PKD1:PKD2 complex to trans-Golgi network and is required for ciliary targeting of PKD1:PKD2 complex. Interacts with DNAAF9.

It is found in the golgi apparatus membrane. Its subcellular location is the cytoplasm. It localises to the cytoskeleton. The protein localises to the spindle. The protein resides in the nucleus. It is found in the microtubule organizing center. Its subcellular location is the centrosome. It localises to the cell projection. The protein localises to the cilium. Its function is as follows. Small GTP-binding protein which cycles between an inactive GDP-bound and an active GTP-bound form, and the rate of cycling is regulated by guanine nucleotide exchange factors (GEF) and GTPase-activating proteins (GAP). Required for normal cytokinesis and cilia signaling. Requires assistance from GTPase-activating proteins (GAPs) like RP2 and PDE6D, in order to cycle between inactive GDP-bound and active GTP-bound forms. Required for targeting proteins to the cilium, including myristoylated NPHP3 and prenylated INPP5E. Targets NPHP3 to the ciliary membrane by releasing myristoylated NPHP3 from UNC119B cargo adapter into the cilium. Required for PKD1:PKD2 complex targeting from the trans-Golgi network to the cilium. The sequence is that of ADP-ribosylation factor-like protein 3 (ARL3) from Sus scrofa (Pig).